A 50-amino-acid polypeptide reads, in one-letter code: Large ribosomal subunit protein bL32 (50 aa).

Over residues 1-26 (MAVPKRRVSHTRSAKRRTHYKITLKK) the composition is skewed to basic residues. A disordered region spans residues 1–50 (MAVPKRRVSHTRSAKRRTHYKITLKKPVKDSDGSWKMPHMVNPNTGEYKN).

It belongs to the bacterial ribosomal protein bL32 family.

This Aliarcobacter butzleri (strain RM4018) (Arcobacter butzleri) protein is Large ribosomal subunit protein bL32.